The chain runs to 570 residues: Cytoplasmic polyadenylation element-binding protein 2 (570 aa).

Positions 434–516 (LVAFIGGVPR…KRVEIKPYFF (83 aa)) constitute an RRM domain.

In terms of tissue distribution, expressed specifically in the spermatogenic germ line.

Cytoplasmic polyadenylation element binding protein that binds to and regulates the translation of specific mRNAs. Not required for oogenesis. This chain is Cytoplasmic polyadenylation element-binding protein 2 (cpb-2), found in Caenorhabditis elegans.